Reading from the N-terminus, the 521-residue chain is Jacalin-related lectin 38 (521 aa).

The F-box domain maps to 2–48; sequence MQPDHDLPYDLEGEILSHLPIQILARFRCVCKRWNTLFKERRFFNSD. Kelch repeat units follow at residues 145–190, 326–373, and 486–521; these read KHYK…PYSV, YIYI…ITQH, and MSFVLGGARGSKIIGFYGRSSDLYLTAFGVHFSPLP. Positions 377 to 519 constitute a Jacalin-type lectin domain; the sequence is SRFAPLRGIQ…LTAFGVHFSP (143 aa).

Belongs to the jacalin lectin family.

This chain is Jacalin-related lectin 38 (JAL38), found in Arabidopsis thaliana (Mouse-ear cress).